The primary structure comprises 252 residues: Carbohydrate deacetylase (252 aa).

The Mg(2+) site is built by His-59 and His-122.

The protein belongs to the YdjC deacetylase family. Homodimer. Mg(2+) is required as a cofactor.

Probably catalyzes the deacetylation of acetylated carbohydrates an important step in the degradation of oligosaccharides. This Vibrio vulnificus (strain CMCP6) protein is Carbohydrate deacetylase.